We begin with the raw amino-acid sequence, 77 residues long: UPF0291 protein OB1671 (77 aa).

The disordered stretch occupies residues 56-77 (DPEGKDVTPQKLRDYQDRNKKH). Positions 57 to 77 (PEGKDVTPQKLRDYQDRNKKH) are enriched in basic and acidic residues.

It belongs to the UPF0291 family.

It localises to the cytoplasm. The chain is UPF0291 protein OB1671 from Oceanobacillus iheyensis (strain DSM 14371 / CIP 107618 / JCM 11309 / KCTC 3954 / HTE831).